Here is a 146-residue protein sequence, read N- to C-terminus: Hemoglobin subunit beta (146 aa).

The Globin domain occupies His2–His146. The heme b site is built by His63 and His92.

This sequence belongs to the globin family. As to quaternary structure, heterotetramer of two alpha chains and two beta chains. As to expression, red blood cells.

Functionally, involved in oxygen transport from the lung to the various peripheral tissues. This Eudyptes chrysocome (Western rockhopper penguin) protein is Hemoglobin subunit beta (HBB).